Consider the following 107-residue polypeptide: Nucleoid-associated protein BLi00029/BL02358 (107 aa).

A disordered region spans residues 1 to 27 (MRGGMGNMQKMMKQMQKMQKDMQKAQE). Over residues 8–17 (MQKMMKQMQK) the composition is skewed to low complexity. Positions 18-27 (MQKDMQKAQE) are enriched in basic and acidic residues.

The protein belongs to the YbaB/EbfC family. Homodimer.

It localises to the cytoplasm. The protein localises to the nucleoid. Its function is as follows. Binds to DNA and alters its conformation. May be involved in regulation of gene expression, nucleoid organization and DNA protection. The protein is Nucleoid-associated protein BLi00029/BL02358 of Bacillus licheniformis (strain ATCC 14580 / DSM 13 / JCM 2505 / CCUG 7422 / NBRC 12200 / NCIMB 9375 / NCTC 10341 / NRRL NRS-1264 / Gibson 46).